The following is a 731-amino-acid chain: Lanosterol synthase ERG7 (731 aa).

At T2 the chain carries N-acetylthreonine. Residues 125 to 167 (RIELIRYIVNTAHPVDGGWGLHSVDKSTVFGTVLNYVILRLLG) form a PFTB 1 repeat. D456 (proton donor) is an active-site residue. The stretch at 615 to 661 (VRKGCDFLVSKQMKDGGWGESMKSSELHSYVDSEKSLVVQTAWALIA) is one PFTB 2 repeat.

This sequence belongs to the terpene cyclase/mutase family.

The protein resides in the lipid droplet. Its subcellular location is the endoplasmic reticulum membrane. The enzyme catalyses (S)-2,3-epoxysqualene = lanosterol. The protein operates within terpene metabolism; lanosterol biosynthesis; lanosterol from farnesyl diphosphate: step 3/3. Its activity is regulated as follows. Catalytic activity requires the presence of ERG27. Functionally, lanosterol synthase; part of the third module of ergosterol biosynthesis pathway that includes the late steps of the pathway. ERG7 catalyzes the cyclization of (S)-2,3 oxidosqualene to lanosterol, a reaction that forms the sterol core. The third module or late pathway involves the ergosterol synthesis itself through consecutive reactions that mainly occur in the endoplasmic reticulum (ER) membrane. Firstly, the squalene synthase ERG9 catalyzes the condensation of 2 farnesyl pyrophosphate moieties to form squalene, which is the precursor of all steroids. Squalene synthase is crucial for balancing the incorporation of farnesyl diphosphate (FPP) into sterol and nonsterol isoprene synthesis. Secondly, the squalene epoxidase ERG1 catalyzes the stereospecific oxidation of squalene to (S)-2,3-epoxysqualene, which is considered to be a rate-limiting enzyme in steroid biosynthesis. Then, the lanosterol synthase ERG7 catalyzes the cyclization of (S)-2,3 oxidosqualene to lanosterol, a reaction that forms the sterol core. In the next steps, lanosterol is transformed to zymosterol through a complex process involving various demethylation, reduction and desaturation reactions. The lanosterol 14-alpha-demethylase ERG11 (also known as CYP51) catalyzes C14-demethylation of lanosterol to produce 4,4'-dimethyl cholesta-8,14,24-triene-3-beta-ol, which is critical for ergosterol biosynthesis. The C-14 reductase ERG24 reduces the C14=C15 double bond of 4,4-dimethyl-cholesta-8,14,24-trienol to produce 4,4-dimethyl-cholesta-8,24-dienol. 4,4-dimethyl-cholesta-8,24-dienol is substrate of the C-4 demethylation complex ERG25-ERG26-ERG27 in which ERG25 catalyzes the three-step monooxygenation required for the demethylation of 4,4-dimethyl and 4alpha-methylsterols, ERG26 catalyzes the oxidative decarboxylation that results in a reduction of the 3-beta-hydroxy group at the C-3 carbon to an oxo group, and ERG27 is responsible for the reduction of the keto group on the C-3. ERG28 has a role as a scaffold to help anchor ERG25, ERG26 and ERG27 to the endoplasmic reticulum and ERG29 regulates the activity of the iron-containing C4-methylsterol oxidase ERG25. Then, the sterol 24-C-methyltransferase ERG6 catalyzes the methyl transfer from S-adenosyl-methionine to the C-24 of zymosterol to form fecosterol. The C-8 sterol isomerase ERG2 catalyzes the reaction which results in unsaturation at C-7 in the B ring of sterols and thus converts fecosterol to episterol. The sterol-C5-desaturase ERG3 then catalyzes the introduction of a C-5 double bond in the B ring to produce 5-dehydroepisterol. The C-22 sterol desaturase ERG5 further converts 5-dehydroepisterol into ergosta-5,7,22,24(28)-tetraen-3beta-ol by forming the C-22(23) double bond in the sterol side chain. Finally, ergosta-5,7,22,24(28)-tetraen-3beta-ol is substrate of the C-24(28) sterol reductase ERG4 to produce ergosterol. In Saccharomyces cerevisiae (strain ATCC 204508 / S288c) (Baker's yeast), this protein is Lanosterol synthase ERG7.